A 191-amino-acid chain; its full sequence is Photosystem I assembly protein Ycf4 (191 aa).

A run of 2 helical transmembrane segments spans residues Val-34 to Phe-54 and Ile-68 to Ile-88.

It belongs to the Ycf4 family.

The protein localises to the cellular thylakoid membrane. Functionally, seems to be required for the assembly of the photosystem I complex. The protein is Photosystem I assembly protein Ycf4 of Prochlorococcus marinus (strain NATL2A).